A 334-amino-acid chain; its full sequence is DNA-directed RNA polymerase subunit alpha (334 aa).

The interval 1 to 234 is alpha N-terminal domain (alpha-NTD); the sequence is MQTKVNELLK…SQLAAFVELQ (234 aa). Residues 248–334 are alpha C-terminal domain (alpha-CTD); that stretch reads IDPILLRPVD…LKDQDKKASG (87 aa).

The protein belongs to the RNA polymerase alpha chain family. Homodimer. The RNAP catalytic core consists of 2 alpha, 1 beta, 1 beta' and 1 omega subunit. When a sigma factor is associated with the core the holoenzyme is formed, which can initiate transcription.

The catalysed reaction is RNA(n) + a ribonucleoside 5'-triphosphate = RNA(n+1) + diphosphate. In terms of biological role, DNA-dependent RNA polymerase catalyzes the transcription of DNA into RNA using the four ribonucleoside triphosphates as substrates. The protein is DNA-directed RNA polymerase subunit alpha of Thioalkalivibrio sulfidiphilus (strain HL-EbGR7).